The primary structure comprises 161 residues: MQDAITAVINASDVQGKYLDSSALDRLKSYFQSGELRVRAAATISANSALIVKEAVAKSLLYSDITRPGGNMYTTRRYAACIRDLEYYLRYATYAMLAGDTSILDERVLNGLKETYNSLGVPIGATVQAIQAIKEVTASLVGPDAGREMGVYLDYISSGLS.

Asn71 carries the post-translational modification N4-methylasparagine. A (2R,3E)-phycocyanobilin-binding site is contributed by Cys81.

This sequence belongs to the phycobiliprotein family. In terms of assembly, heterodimer of an alpha and a beta chain. In terms of processing, contains one covalently linked phycocyanobilin chromophore.

It localises to the cellular thylakoid membrane. Functionally, light-harvesting photosynthetic bile pigment-protein from the phycobiliprotein complex. Allophycocyanin has a maximum absorption at approximately 650 nanometers. The polypeptide is Allophycocyanin beta chain (apcB) (Synechococcus sp. (strain ATCC 27144 / PCC 6301 / SAUG 1402/1) (Anacystis nidulans)).